A 92-amino-acid chain; its full sequence is LYR motif-containing protein 4 homolog (92 aa).

The stretch at A40–V68 forms a coiled coil.

The protein belongs to the complex I LYR family. In terms of assembly, component of the mitochondrial core iron-sulfur cluster (ISC) assembly complex at least composed of the cysteine desulfurase Nfs1, the scaffold protein IscU, the accessory protein bcn92/Isd11/Lyrm4, and probably fh/frataxin. Interacts with Nfs1.

Its subcellular location is the mitochondrion. Its function is as follows. Stabilizing factor of the core iron-sulfur cluster (ISC) assembly complex that regulates the stability and cysteine desulfurase activity of Nfs1 and participates in the [2Fe-2S] clusters assembly on the scaffolding protein IscU. This chain is LYR motif-containing protein 4 homolog, found in Drosophila subobscura (Fruit fly).